A 530-amino-acid polypeptide reads, in one-letter code: Arginine--tRNA ligase (530 aa).

Residues 113-123 carry the 'HIGH' region motif; it reads ANPTGPLHIGH.

It belongs to the class-I aminoacyl-tRNA synthetase family. Monomer.

The protein localises to the cytoplasm. It catalyses the reaction tRNA(Arg) + L-arginine + ATP = L-arginyl-tRNA(Arg) + AMP + diphosphate. This is Arginine--tRNA ligase from Campylobacter jejuni subsp. jejuni serotype O:23/36 (strain 81-176).